We begin with the raw amino-acid sequence, 346 residues long: L-glyceraldehyde 3-phosphate reductase (346 aa).

Residues W33, D61, Y66, S168, Q193, T223, L225, Q227, K233, S303, Q307, and N311 each contribute to the NADP(+) site.

The protein belongs to the shaker potassium channel beta subunit family.

It catalyses the reaction a primary alcohol + NADP(+) = an aldehyde + NADPH + H(+). Its function is as follows. Aldo-keto reductase that catalyzes the stereospecific, NADPH-dependent reduction of L-glyceraldehyde 3-phosphate (L-GAP) to L-glycerol 3-phosphate (L-G3P). This Escherichia coli O157:H7 protein is L-glyceraldehyde 3-phosphate reductase.